Consider the following 377-residue polypeptide: Progesterone receptor (377 aa).

A modulating, Pro-Rich region spans residues 1-15 (EASQSPQYSFESLPQ). The nuclear receptor DNA-binding region spans 16-90 (KICLICGDEA…AGMVLGGRKF (75 aa)). NR C4-type zinc fingers lie at residues 18 to 38 (CLICGDEASGCHYGVLTCGSC) and 54 to 78 (CAGRNDCIVDKIRRKNCPACRLRKC). At Ser-127 the chain carries Phosphoserine. One can recognise an NR LBD domain in the interval 130 to 364 (QDLQLIPPLI…EFPEMMSEVI (235 aa)). The tract at residues 138–377 (LINLLMSIEP…LPKILAGMVK (240 aa)) is AF2; mediates transcriptional activation.

It belongs to the nuclear hormone receptor family. NR3 subfamily. Interacts with CUEDC2, SMARD1 and with UNC45A. Interacts with PRMT2. Interacts with NCOA2 and NCOA1. Interacts with KLF9. Interacts with GTF2B. Palmitoylated by ZDHHC7 and ZDHHC21. Palmitoylation is required for plasma membrane targeting and for rapid intracellular signaling via ERK and AKT kinases and cAMP generation.

It is found in the nucleus. The steroid hormones and their receptors are involved in the regulation of eukaryotic gene expression and affect cellular proliferation and differentiation in target tissues. Transcriptional activator of several progesteron-dependent promoters in a variety of cell types. Involved in activation of SRC-dependent MAPK signaling on hormone stimulation. In Ovis aries (Sheep), this protein is Progesterone receptor (PGR).